We begin with the raw amino-acid sequence, 215 residues long: MNIVLLGPPGSGKGTQAKMIAEKFNVKHISTGDILREHVRNGTELGKEAKKYMDAGQLVPDSILIGIIKDRLSKPDVAGGYMLDGYPRTIPQAEALDKILPELKQKIDVVLNIDVPDEELVRRLSGRRMCKCGRSYHIIFNPPKVPGKCDECGGELYHRDDDKEEAILNRLKVYKQQTQPLIDYYTKAGLIANINGAGEINQIFDEISKVLSKFQ.

10–15 (GSGKGT) contributes to the ATP binding site. The interval 30-59 (STGDILREHVRNGTELGKEAKKYMDAGQLV) is NMP. AMP is bound by residues Thr-31, Arg-36, 57–59 (QLV), 85–88 (GYPR), and Gln-92. The segment at 126-162 (GRRMCKCGRSYHIIFNPPKVPGKCDECGGELYHRDDD) is LID. Arg-127 serves as a coordination point for ATP. Zn(2+)-binding residues include Cys-130 and Cys-132. 135–136 (SY) is a binding site for ATP. 2 residues coordinate Zn(2+): Cys-149 and Cys-152. AMP-binding residues include Arg-159 and Arg-170. Gly-198 contacts ATP.

It belongs to the adenylate kinase family. Monomer.

It localises to the cytoplasm. The enzyme catalyses AMP + ATP = 2 ADP. Its pathway is purine metabolism; AMP biosynthesis via salvage pathway; AMP from ADP: step 1/1. Catalyzes the reversible transfer of the terminal phosphate group between ATP and AMP. Plays an important role in cellular energy homeostasis and in adenine nucleotide metabolism. This chain is Adenylate kinase, found in Methanothrix thermoacetophila (strain DSM 6194 / JCM 14653 / NBRC 101360 / PT) (Methanosaeta thermophila).